The primary structure comprises 117 residues: Large ribosomal subunit protein bL20 (117 aa).

The protein belongs to the bacterial ribosomal protein bL20 family.

Functionally, binds directly to 23S ribosomal RNA and is necessary for the in vitro assembly process of the 50S ribosomal subunit. It is not involved in the protein synthesizing functions of that subunit. The chain is Large ribosomal subunit protein bL20 from Neorickettsia sennetsu (strain ATCC VR-367 / Miyayama) (Ehrlichia sennetsu).